We begin with the raw amino-acid sequence, 472 residues long: Violaxanthin de-epoxidase, chloroplastic (472 aa).

6 cysteine pairs are disulfide-bonded: Cys133–Cys151, Cys138–Cys145, Cys157–Cys174, Cys161–Cys170, Cys189–Cys196, and Cys242–Cys372. A coiled-coil region spans residues Val379–Phe462.

Belongs to the calycin superfamily. Lipocalin family. Post-translationally, disulfide bonds. Reduction of the disulfides results in loss of a rigid structure, a decrease in thermal stability of 15 degrees Celsius and a loss of activity.

The protein resides in the plastid. It localises to the chloroplast thylakoid membrane. The catalysed reaction is all-trans-violaxanthin + 2 L-ascorbate = all-trans-zeaxanthin + 2 L-dehydroascorbate + 2 H2O. Irreversibly inhibited by DTT and iodoacetamide at pH 5.7 or pH 5.2, but not at pH 7.2. Regulated through Ca(2+) gating of H(+) flux at the CFoH(+) channel. Requires the presence of lipids forming reverse hexagonal structures such as monogalactosyldiacylglyceride (MGDG) or phosphatidylethanolamine. A negative curvature elastic stress in the thylakoid lipid bilayer is required for VDE1 activity. In terms of biological role, part of the xanthophyll (or violaxanthin) cycle for controlling the concentration of zeaxanthin in chloroplasts. Catalyzes the two-step mono de-epoxidation reaction. Stereospecific for all-trans xanthophylls. Zeaxanthin induces the dissipation of excitation energy in the chlorophyll of the light-harvesting protein complex of photosystem II. The protein is Violaxanthin de-epoxidase, chloroplastic of Spinacia oleracea (Spinach).